Here is a 299-residue protein sequence, read N- to C-terminus: MSEPIDLSQISPSLKAEILAEALPYIRRYHGKTVVIKYGGNAMTEERLKQGFARDVILLKLVGINPVIVHGGGPQIDQALKKIGKQGTFIQGMRVTDEETMEVVEWVLGGEVQQDIVTLINHFGGHAVGLTGKDGGLIHARKLMMPDRDNPGEYVDIGQVGEVEAINPAVVRALQDDAFIPVISPIGFGEDGLSYNINADLVAGKLATVLNAEKLVMMTNIPGVMDKEGNLLTDLSAREIDALFEDGTISGGMLPKISSALDAAKSGVKSVHIVDGRIEHSVLLEILTEQPFGTMIRSH.

Substrate contacts are provided by residues 72–73 (GG), arginine 94, and asparagine 196.

Belongs to the acetylglutamate kinase family. ArgB subfamily.

The protein localises to the cytoplasm. It carries out the reaction N-acetyl-L-glutamate + ATP = N-acetyl-L-glutamyl 5-phosphate + ADP. The protein operates within amino-acid biosynthesis; L-arginine biosynthesis; N(2)-acetyl-L-ornithine from L-glutamate: step 2/4. Catalyzes the ATP-dependent phosphorylation of N-acetyl-L-glutamate. The sequence is that of Acetylglutamate kinase from Burkholderia thailandensis (strain ATCC 700388 / DSM 13276 / CCUG 48851 / CIP 106301 / E264).